A 268-amino-acid chain; its full sequence is 4-hydroxy-tetrahydrodipicolinate reductase (268 aa).

NAD(+)-binding positions include 8 to 13 (GAAGRM) and E34. R35 contacts NADP(+). Residues 96–98 (GST) and 120–123 (SPNM) each bind NAD(+). H153 (proton donor/acceptor) is an active-site residue. H154 provides a ligand contact to (S)-2,3,4,5-tetrahydrodipicolinate. K157 serves as the catalytic Proton donor. Residue 163-164 (GT) coordinates (S)-2,3,4,5-tetrahydrodipicolinate.

The protein belongs to the DapB family.

It localises to the cytoplasm. The enzyme catalyses (S)-2,3,4,5-tetrahydrodipicolinate + NAD(+) + H2O = (2S,4S)-4-hydroxy-2,3,4,5-tetrahydrodipicolinate + NADH + H(+). It carries out the reaction (S)-2,3,4,5-tetrahydrodipicolinate + NADP(+) + H2O = (2S,4S)-4-hydroxy-2,3,4,5-tetrahydrodipicolinate + NADPH + H(+). Its pathway is amino-acid biosynthesis; L-lysine biosynthesis via DAP pathway; (S)-tetrahydrodipicolinate from L-aspartate: step 4/4. Catalyzes the conversion of 4-hydroxy-tetrahydrodipicolinate (HTPA) to tetrahydrodipicolinate. This chain is 4-hydroxy-tetrahydrodipicolinate reductase, found in Anaeromyxobacter sp. (strain Fw109-5).